A 144-amino-acid polypeptide reads, in one-letter code: UPF0102 protein BMA2801 (144 aa).

The interval 1 to 28 is disordered; sequence MCHAREASPGTGEPEAAPRDNFPRAAGS.

It belongs to the UPF0102 family.

The protein is UPF0102 protein BMA2801 of Burkholderia mallei (strain ATCC 23344).